The following is a 149-amino-acid chain: Probable flagellum biosynthesis repressor protein FlbT (149 aa).

It belongs to the FlbT family.

Its function is as follows. Has a post-transcriptional repressor function in flagellum biogenesis. Associates with the 5'-UTR of fljK mRNA and promotes its degradation. The sequence is that of Probable flagellum biosynthesis repressor protein FlbT from Rhizobium etli (strain ATCC 51251 / DSM 11541 / JCM 21823 / NBRC 15573 / CFN 42).